A 338-amino-acid chain; its full sequence is Mitochondrial glutathione transporter SLC25A40 (338 aa).

Solcar repeat units follow at residues 13–131 (VTPL…LSAL), 139–223 (NETC…LKKW), and 233–327 (PTFM…GKAF). 6 helical membrane-spanning segments follow: residues 19-39 (MLASCTGAILTSVIVTPLDVV), 103-123 (LWSGLPPTLVMAVPATVIYFT), 142-162 (CIPIVAGIVARFGAVTVISPL), 199-220 (WAPTVLRDVPFSAMYWYNYEIL), 239-259 (FTSGALSGSFAAVATLPFDVV), and 298-318 (GLFSGLIPRLIKIAPACAIMI).

It belongs to the mitochondrial carrier (TC 2.A.29) family.

It localises to the mitochondrion inner membrane. It catalyses the reaction glutathione(in) = glutathione(out). Probable mitochondrial transporter required for glutathione import into mitochondria. Glutathione, which plays key roles in oxidative metabolism, is produced exclusively in the cytosol and is imported in many organelles. Mitochondrial glutathione is required for the activity and stability of proteins containing iron-sulfur clusters, as well as erythropoiesis. This chain is Mitochondrial glutathione transporter SLC25A40, found in Homo sapiens (Human).